The sequence spans 357 residues: Phenylalanine--tRNA ligase alpha subunit (357 aa).

Position 278 (Glu-278) interacts with Mg(2+).

Belongs to the class-II aminoacyl-tRNA synthetase family. Phe-tRNA synthetase alpha subunit type 1 subfamily. As to quaternary structure, tetramer of two alpha and two beta subunits. Requires Mg(2+) as cofactor.

The protein localises to the cytoplasm. The enzyme catalyses tRNA(Phe) + L-phenylalanine + ATP = L-phenylalanyl-tRNA(Phe) + AMP + diphosphate + H(+). This is Phenylalanine--tRNA ligase alpha subunit from Albidiferax ferrireducens (strain ATCC BAA-621 / DSM 15236 / T118) (Rhodoferax ferrireducens).